The chain runs to 245 residues: 1-(5-phosphoribosyl)-5-[(5-phosphoribosylamino)methylideneamino] imidazole-4-carboxamide isomerase (245 aa).

Asp-7 (proton acceptor) is an active-site residue. Residue Asp-129 is the Proton donor of the active site.

It belongs to the HisA/HisF family.

The protein localises to the cytoplasm. It catalyses the reaction 1-(5-phospho-beta-D-ribosyl)-5-[(5-phospho-beta-D-ribosylamino)methylideneamino]imidazole-4-carboxamide = 5-[(5-phospho-1-deoxy-D-ribulos-1-ylimino)methylamino]-1-(5-phospho-beta-D-ribosyl)imidazole-4-carboxamide. It participates in amino-acid biosynthesis; L-histidine biosynthesis; L-histidine from 5-phospho-alpha-D-ribose 1-diphosphate: step 4/9. This Shewanella amazonensis (strain ATCC BAA-1098 / SB2B) protein is 1-(5-phosphoribosyl)-5-[(5-phosphoribosylamino)methylideneamino] imidazole-4-carboxamide isomerase.